A 389-amino-acid polypeptide reads, in one-letter code: Nicotinate phosphoribosyltransferase (389 aa).

Histidine 216 is subject to Phosphohistidine; by autocatalysis.

It belongs to the NAPRTase family. In terms of processing, transiently phosphorylated on a His residue during the reaction cycle. Phosphorylation strongly increases the affinity for substrates and increases the rate of nicotinate D-ribonucleotide production. Dephosphorylation regenerates the low-affinity form of the enzyme, leading to product release.

It catalyses the reaction nicotinate + 5-phospho-alpha-D-ribose 1-diphosphate + ATP + H2O = nicotinate beta-D-ribonucleotide + ADP + phosphate + diphosphate. The protein operates within cofactor biosynthesis; NAD(+) biosynthesis; nicotinate D-ribonucleotide from nicotinate: step 1/1. Its function is as follows. Catalyzes the synthesis of beta-nicotinate D-ribonucleotide from nicotinate and 5-phospho-D-ribose 1-phosphate at the expense of ATP. This Ralstonia nicotianae (strain ATCC BAA-1114 / GMI1000) (Ralstonia solanacearum) protein is Nicotinate phosphoribosyltransferase.